The following is a 1570-amino-acid chain: Mediator of RNA polymerase II transcription subunit 1 (1570 aa).

2 consecutive short sequence motifs (LXXLL motif) follow at residues 585–589 and 626–630; these read LTSLL and LMNLL. Disordered regions lie at residues 592-687, 771-880, and 922-1561; these read TNNT…TEDD, SKLS…FKDF, and SKTL…MDDD. A compositionally biased stretch (basic and acidic residues) spans 675–687; it reads TGAEKMKNQTEDD. Composition is skewed to polar residues over residues 788 to 801, 832 to 861, and 931 to 942; these read RDSS…STLF, GSPN…QSGF, and QETQSRSQSPLL. The span at 946 to 958 shows a compositional bias: basic and acidic residues; sequence LGKDRPQKQKVKE. Gly residues predominate over residues 961–970; the sequence is NGGGAGGGLS. 5 stretches are compositionally biased toward low complexity: residues 1022–1035, 1066–1082, 1089–1113, 1121–1140, and 1152–1161; these read PTST…GTSG, SSHG…SSSS, SSLS…MKIG, SGQS…SMGK, and SSNVSNSSGS. Over residues 1173–1190 the composition is skewed to polar residues; sequence MNPSLSKPNISPSHSRPS. A compositionally biased stretch (gly residues) spans 1217–1228; it reads GSGGQHLSGGGS. Over residues 1229–1271 the composition is skewed to low complexity; the sequence is NSTTKSSSGLVSSGSLSQKPNSSSSSSSSSSSSSSSSSSSSSS. Residues 1276-1287 are compositionally biased toward polar residues; the sequence is VSQNLHGNSKGK. Residues 1308 to 1328 show a composition bias toward gly residues; sequence VGTGGPGSEDPMDGGGGGGST. The span at 1347 to 1359 shows a compositional bias: basic and acidic residues; that stretch reads PTKREKSEKDKSK. Composition is skewed to polar residues over residues 1418 to 1433 and 1441 to 1455; these read SQMQ…SGST and PSHN…QALD. Positions 1459-1469 are enriched in low complexity; that stretch reads ESGSSSIAEKS. Residues 1494 to 1503 are compositionally biased toward basic residues; that stretch reads KHKKHKKEKK. Over residues 1504–1516 the composition is skewed to basic and acidic residues; that stretch reads RLKDKDRDREKKK. The span at 1536-1546 shows a compositional bias: low complexity; the sequence is MAMSGGSMMSS.

The protein belongs to the Mediator complex subunit 1 family. As to quaternary structure, component of the Mediator complex.

It is found in the nucleus. Functionally, component of the Mediator complex, a coactivator involved in the regulated transcription of nearly all RNA polymerase II-dependent genes. Mediator functions as a bridge to convey information from gene-specific regulatory proteins to the basal RNA polymerase II transcription machinery. Mediator is recruited to promoters by direct interactions with regulatory proteins and serves as a scaffold for the assembly of a functional preinitiation complex with RNA polymerase II and the general transcription factors. This Xenopus laevis (African clawed frog) protein is Mediator of RNA polymerase II transcription subunit 1 (med1).